The chain runs to 327 residues: Transaldolase (327 aa).

The Schiff-base intermediate with substrate role is filled by Lys-132.

Belongs to the transaldolase family. Type 1 subfamily. As to quaternary structure, homodimer.

The protein localises to the cytoplasm. The catalysed reaction is D-sedoheptulose 7-phosphate + D-glyceraldehyde 3-phosphate = D-erythrose 4-phosphate + beta-D-fructose 6-phosphate. It functions in the pathway carbohydrate degradation; pentose phosphate pathway; D-glyceraldehyde 3-phosphate and beta-D-fructose 6-phosphate from D-ribose 5-phosphate and D-xylulose 5-phosphate (non-oxidative stage): step 2/3. In terms of biological role, transaldolase is important for the balance of metabolites in the pentose-phosphate pathway. The polypeptide is Transaldolase (Chlamydia felis (strain Fe/C-56) (Chlamydophila felis)).